A 239-amino-acid chain; its full sequence is Pathogenesis-related protein 5 (239 aa).

An N-terminal signal peptide occupies residues 1 to 23 (MANISSIHILFLVFITSGIAVMA). 8 cysteine pairs are disulfide-bonded: Cys32–Cys238, Cys79–Cys89, Cys94–Cys99, Cys146–Cys228, Cys151–Cys211, Cys159–Cys174, Cys178–Cys187, and Cys188–Cys198.

The protein belongs to the thaumatin family.

Its subcellular location is the secreted. It is found in the extracellular space. The protein resides in the apoplast. Its function is as follows. Partially responsible for acquired pathogen resistance. The protein is Pathogenesis-related protein 5 of Arabidopsis thaliana (Mouse-ear cress).